Here is a 450-residue protein sequence, read N- to C-terminus: DNA primase DnaG (450 aa).

In terms of domain architecture, Toprim spans D199–E273. Mg(2+)-binding residues include E205, D247, and D249. The segment covering A320–I348 has biased composition (basic and acidic residues). Positions A320 to P350 are disordered.

Belongs to the archaeal DnaG primase family. In terms of assembly, forms a ternary complex with MCM helicase and DNA. Component of the archaeal exosome complex. It depends on Mg(2+) as a cofactor.

The enzyme catalyses ssDNA + n NTP = ssDNA/pppN(pN)n-1 hybrid + (n-1) diphosphate.. Functionally, RNA polymerase that catalyzes the synthesis of short RNA molecules used as primers for DNA polymerase during DNA replication. Also part of the exosome, which is a complex involved in RNA degradation. Acts as a poly(A)-binding protein that enhances the interaction between heteromeric, adenine-rich transcripts and the exosome. This Thermococcus gammatolerans (strain DSM 15229 / JCM 11827 / EJ3) protein is DNA primase DnaG.